The primary structure comprises 182 residues: Endoribonuclease YbeY (182 aa).

Zn(2+) is bound by residues histidine 115, histidine 119, and histidine 125.

It belongs to the endoribonuclease YbeY family. The cofactor is Zn(2+).

It localises to the cytoplasm. Functionally, single strand-specific metallo-endoribonuclease involved in late-stage 70S ribosome quality control and in maturation of the 3' terminus of the 16S rRNA. In Bifidobacterium longum subsp. infantis (strain ATCC 15697 / DSM 20088 / JCM 1222 / NCTC 11817 / S12), this protein is Endoribonuclease YbeY.